The chain runs to 62 residues: Pro-MCH variant (62 aa).

The interval 23–41 is NGE-like; sequence GSVAFPAENGVQDTESTQE. The interval 29-62 is disordered; that stretch reads AENGVQDTESTQEKRETGDEENSAKFPIGRRDFD. Residues 44–56 form an NEI-like region; sequence ETGDEENSAKFPI. The segment at 60 to 62 is melanin-concentrating hormone-like; it reads DFD.

The protein belongs to the melanin-concentrating hormone family.

This Pan paniscus (Pygmy chimpanzee) protein is Pro-MCH variant (PMCHL1).